The primary structure comprises 292 residues: Protein-L-isoaspartate O-methyltransferase (292 aa).

The segment at 1–76 (MTEKKRFPLS…AAAPSSNERA (76 aa)) is disordered. Positions 28-48 (NRSSTSGKVATPQTATQNASQ) are enriched in polar residues. S138 is a catalytic residue.

This sequence belongs to the methyltransferase superfamily. L-isoaspartyl/D-aspartyl protein methyltransferase family.

It is found in the cytoplasm. The enzyme catalyses [protein]-L-isoaspartate + S-adenosyl-L-methionine = [protein]-L-isoaspartate alpha-methyl ester + S-adenosyl-L-homocysteine. Functionally, catalyzes the methyl esterification of L-isoaspartyl residues in peptides and proteins that result from spontaneous decomposition of normal L-aspartyl and L-asparaginyl residues. It plays a role in the repair and/or degradation of damaged proteins. This chain is Protein-L-isoaspartate O-methyltransferase, found in Janthinobacterium sp. (strain Marseille) (Minibacterium massiliensis).